We begin with the raw amino-acid sequence, 356 residues long: Dynein regulatory complex protein 10 (356 aa).

Positions 126–167 (SNREFFEEVRDREERAVAEQEQLKQKLKLQRVELQKAAGTIQ) form a coiled coil. The disordered stretch occupies residues 173–209 (ARGEVSEVQSSTQQSRAAIEGSARAQSEADKSSFQSD). Over residues 178–187 (SEVQSSTQQS) the composition is skewed to low complexity. Residues 197-287 (AQSEADKSSF…LRQLQEYNSG (91 aa)) are a coiled coil. Residues 319–348 (QNHAARVIQSYWRGFKKAREAAKKKAKKLE) form the IQ domain.

It belongs to the DRC10 family. As to quaternary structure, component of the nexin-dynein regulatory complex (N-DRC).

Its subcellular location is the cytoplasm. It is found in the cytoskeleton. The protein localises to the flagellum axoneme. Component of the nexin-dynein regulatory complex (N-DRC), a key regulator of ciliary/flagellar motility which maintains the alignment and integrity of the distal axoneme and regulates microtubule sliding in motile axonemes. This chain is Dynein regulatory complex protein 10, found in Chlamydomonas reinhardtii (Chlamydomonas smithii).